The following is a 769-amino-acid chain: MSKCRKTPVQQLASPTSFSPDILADIFELFAKNFSYSKPLNNEWQLPDPSEIFTCDHTEFNAFLDLKNSLNEVKNLLSDKKLDEWHEHTAFTNKAGKIISHVRKSVNAELCTQAWCKFHEILCSFPLIPQEAFQNGKLNSLHLCEAPGAFIASLNHYLKSHRFPCHWSWVANTLNPYHEANDDLMMIMDDRLIANTLHWWYFGPDNTGDIMTLKFLTGLQNFISSMATVHLVTADGSFDCQGNPGEQEALVSSLHYCEVVTALTTLGNGGSFVLKMFTMFEHCSINLMYLLNCCLDQVHVFKPATSKAGNSEVYVVCLYYKGREAIHPLLSKMTLNFGTEMKRKALFPHHVIPDSFLKRHEECCVFFHKYQLETISENIRLFECMGKAEQEKLNNLRDCAVQYFMQKFQLKHLSRNNWLVKKSSIGCSTNTKWFGQRNKYFRTYNERKMLEALSWKDKVAKGYFNSWAEEHGVYHPGQSSILEGTASNLECHLWHILEGKKLPKVKCSPFCNGEILKTLNEAIEKSLGGAFNLDSKFRPKQQYSCSCHVFSEELIFSELCSLTECLQDEQVVEPSNRIKCLLVGFSTLHNIKMHIPLEVRLLESAELTTFSCSLLHDGDPTYQRLFLDCLLHSLRELHTGDVMILPVLSCFTRFMAGLIFVLHSCFRFITFFCPTSSDPLRTCAVLLCVGYQDLPNPVFQYLQSVNELLSTLLNSDSPQQVLQFVPMEVLLKGALLDFLWDLNAAIAKRHLHFIIQREREEINSLQLQN.

The Adrift-type SAM-dependent 2'-O-MTase domain maps to 109–322 (ELCTQAWCKF…VYVVCLYYKG (214 aa)). K117 is a catalytic residue. S-adenosyl-L-methionine contacts are provided by G148, W167, and D235. The active site involves D235. K275 serves as the catalytic Proton acceptor.

It is found in the nucleus. The protein resides in the cytoplasm. The enzyme catalyses a 5'-end (N(7)-methyl 5'-triphosphoguanosine)-(2'-O-methyl-ribonucleoside)-(ribonucleotide) in mRNA + S-adenosyl-L-methionine = a 5'-end (N(7)-methyl 5'-triphosphoguanosine)-(2'-O-methyl-ribonucleoside)-(2'-O-methyl-ribonucleotide) in mRNA + S-adenosyl-L-homocysteine + H(+). In terms of biological role, S-adenosyl-L-methionine-dependent methyltransferase that mediates mRNA cap2 2'-O-ribose methylation to the 5'-cap structure of mRNAs. Methylates the ribose of the second nucleotide of a m(7)GpppG-capped mRNA and small nuclear RNA (snRNA) (cap0) to produce m(7)GpppRmpNm (cap2). Recognizes a guanosine cap on RNA independently of its N(7) methylation status. Display cap2 methylation on both cap0 and cap1. Displays a preference for cap1 RNAs. In Pongo abelii (Sumatran orangutan), this protein is Cap-specific mRNA (nucleoside-2'-O-)-methyltransferase 2 (CMTR2).